Here is a 200-residue protein sequence, read N- to C-terminus: UPF0301 protein BruAb1_0502 (200 aa).

The protein belongs to the UPF0301 (AlgH) family.

The sequence is that of UPF0301 protein BruAb1_0502 from Brucella abortus biovar 1 (strain 9-941).